Consider the following 218-residue polypeptide: GTP cyclohydrolase 1 (218 aa).

Residues cysteine 109, histidine 112, and cysteine 180 each contribute to the Zn(2+) site.

Belongs to the GTP cyclohydrolase I family. As to quaternary structure, toroid-shaped homodecamer, composed of two pentamers of five dimers.

It catalyses the reaction GTP + H2O = 7,8-dihydroneopterin 3'-triphosphate + formate + H(+). It participates in cofactor biosynthesis; 7,8-dihydroneopterin triphosphate biosynthesis; 7,8-dihydroneopterin triphosphate from GTP: step 1/1. The polypeptide is GTP cyclohydrolase 1 (Haemophilus influenzae (strain 86-028NP)).